The chain runs to 697 residues: Polyribonucleotide nucleotidyltransferase (697 aa).

Residues aspartate 484 and aspartate 490 each coordinate Mg(2+). A KH domain is found at 551–610 (PRITTIWVKTDKIRDVIGSGGKNIRGITEATGVSIDIEDSGRINIASTSKEACDKAIKMI). An S1 motif domain is found at 620-688 (GKLYMGTVKK…KQGKIKLSRK (69 aa)).

It belongs to the polyribonucleotide nucleotidyltransferase family. Requires Mg(2+) as cofactor.

It is found in the cytoplasm. It carries out the reaction RNA(n+1) + phosphate = RNA(n) + a ribonucleoside 5'-diphosphate. In terms of biological role, involved in mRNA degradation. Catalyzes the phosphorolysis of single-stranded polyribonucleotides processively in the 3'- to 5'-direction. This chain is Polyribonucleotide nucleotidyltransferase, found in Geobacter sulfurreducens (strain ATCC 51573 / DSM 12127 / PCA).